The primary structure comprises 698 residues: Cytochrome c oxidase subunit 1 (698 aa).

A helical membrane pass occupies residues 65–85 (INYLYFSMVTGLSGAALATMI). Position 88 (E88) interacts with Ca(2+). Fe(II)-heme a is bound at residue H111. Transmembrane regions (helical) follow at residues 113–133 (LIMVFFVVVPILFGGFANFLI), 147–167 (LNSIGFWIQPCGYILLAKIGF), 304–324 (ILILSVVFAGISTTISFTNLL), 349–369 (IFLTLRMLATITPVLGAAVIM), 395–415 (LFWFFGHPEVYVLIIPTFGFI), 434–454 (IWAIYVMAYMGYLVWGHHMYL), 468–488 (ITIMISMPATIKVVNWTLSLV), and 498–518 (FLFSMSFLLLFLVAGFTGMWL). Residue H401 participates in Cu cation binding. Positions 401–405 (HPEVY) form a cross-link, 1'-histidyl-3'-tyrosine (His-Tyr). Y405 lines the O2 pocket. Cu cation-binding residues include H450 and H451. H528 and D529 together coordinate Mg(2+). 3 consecutive transmembrane segments (helical) span residues 533-553 (VVAHFHIMLSGAAITGIFSGF), 574-594 (LIYYSGGQWVAFVPQFYLGFS), and 613-633 (MSTAGHFITLIGIMFFFLMIF). Residue H536 participates in heme a3 binding. Fe(II)-heme a is bound at residue H538.

This sequence belongs to the heme-copper respiratory oxidase family. As to quaternary structure, component of the cytochrome c oxidase (complex IV, CIV), a multisubunit enzyme composed of a catalytic core of 3 subunits and several supernumerary subunits. The complex exists as a monomer or a dimer and forms supercomplexes (SCs) in the inner mitochondrial membrane with ubiquinol-cytochrome c oxidoreductase (cytochrome b-c1 complex, complex III, CIII). It depends on heme as a cofactor. Cu cation is required as a cofactor.

It is found in the mitochondrion inner membrane. It carries out the reaction 4 Fe(II)-[cytochrome c] + O2 + 8 H(+)(in) = 4 Fe(III)-[cytochrome c] + 2 H2O + 4 H(+)(out). It functions in the pathway energy metabolism; oxidative phosphorylation. Its function is as follows. Component of the cytochrome c oxidase, the last enzyme in the mitochondrial electron transport chain which drives oxidative phosphorylation. The respiratory chain contains 3 multisubunit complexes succinate dehydrogenase (complex II, CII), ubiquinol-cytochrome c oxidoreductase (cytochrome b-c1 complex, complex III, CIII) and cytochrome c oxidase (complex IV, CIV), that cooperate to transfer electrons derived from NADH and succinate to molecular oxygen, creating an electrochemical gradient over the inner membrane that drives transmembrane transport and the ATP synthase. Cytochrome c oxidase is the component of the respiratory chain that catalyzes the reduction of oxygen to water. Electrons originating from reduced cytochrome c in the intermembrane space (IMS) are transferred via the dinuclear copper A center (CU(A)) of subunit 2 and heme A of subunit 1 to the active site in subunit 1, a binuclear center (BNC) formed by heme A3 and copper B (CU(B)). The BNC reduces molecular oxygen to 2 water molecules using 4 electrons from cytochrome c in the IMS and 4 protons from the mitochondrial matrix. The protein is Cytochrome c oxidase subunit 1 (COI) of Tetrahymena pyriformis.